A 728-amino-acid chain; its full sequence is Catalase-peroxidase 1 (728 aa).

The tryptophyl-tyrosyl-methioninium (Trp-Tyr) (with M-244) cross-link spans 91-218 (WHSAGTYRTA…LAAVQMGLIY (128 aa)). Residue histidine 92 is the Proton acceptor of the active site. Residues 218–244 (YVNPEGPDGNPDPVAAAHDIRETFARM) constitute a cross-link (tryptophyl-tyrosyl-methioninium (Tyr-Met) (with W-91)). Histidine 259 is a binding site for heme b.

It belongs to the peroxidase family. Peroxidase/catalase subfamily. Homodimer or homotetramer. Heme b serves as cofactor. In terms of processing, formation of the three residue Trp-Tyr-Met cross-link is important for the catalase, but not the peroxidase activity of the enzyme.

It catalyses the reaction H2O2 + AH2 = A + 2 H2O. It carries out the reaction 2 H2O2 = O2 + 2 H2O. Bifunctional enzyme with both catalase and broad-spectrum peroxidase activity. In Burkholderia cenocepacia (strain ATCC BAA-245 / DSM 16553 / LMG 16656 / NCTC 13227 / J2315 / CF5610) (Burkholderia cepacia (strain J2315)), this protein is Catalase-peroxidase 1.